The primary structure comprises 318 residues: Taste receptor type 2 member 60 (318 aa).

The Extracellular portion of the chain corresponds to 1-7 (MNGDHMV). Residues 8-28 (LGSSMTDEKAIILVIILLLLC) traverse the membrane as a helical segment. The Cytoplasmic segment spans residues 29–40 (LVAIAGNCFITA). A helical transmembrane segment spans residues 41 to 61 (ALGMEWVLQRMLLPCDKLLVS). At 62 to 88 (LGASRFCPQWVVMGKTTYVFLYPTAFP) the chain is on the extracellular side. The chain crosses the membrane as a helical span at residues 89 to 109 (YNPVLRFLAFQWDLLNAATLW). Topologically, residues 110–128 (FSTWLSVFYCVKIATFTHP) are cytoplasmic. A helical membrane pass occupies residues 129–149 (VFLWLKHKLSEWVPWMLFSSV). The Extracellular portion of the chain corresponds to 150 to 183 (GLSSFTTILFFIGNHRVYQSYLRNHLQPWNVTGN). The N-linked (GlcNAc...) asparagine glycan is linked to Asn179. Residues 184–204 (SIWSYCEKFYLFPLKMITWTM) form a helical membrane-spanning segment. The Cytoplasmic segment spans residues 205–234 (PTAVFFICMILLITSLGRHMKKALLTNSGF). The helical transmembrane segment at 235–255 (RDPSVQAHIKAMLALLSFAML) threads the bilayer. The Extracellular portion of the chain corresponds to 256-264 (FISYFLSLV). A helical membrane pass occupies residues 265-285 (FSAAGIFPPLDFKFWVWESVI). The Cytoplasmic portion of the chain corresponds to 286 to 318 (YLCAAVHPIILLFSNRRLRAVLKRCRSSRCGTP).

This sequence belongs to the G-protein coupled receptor T2R family.

The protein localises to the membrane. Its function is as follows. Receptor that may play a role in the perception of bitterness and is gustducin-linked. May play a role in sensing the chemical composition of the gastrointestinal content. The activity of this receptor may stimulate alpha gustducin, mediate PLC-beta-2 activation and lead to the gating of TRPM5. This chain is Taste receptor type 2 member 60 (TAS2R60), found in Pongo pygmaeus (Bornean orangutan).